Here is a 1208-residue protein sequence, read N- to C-terminus: Chromosome partition protein Smc (1208 aa).

32 to 39 contacts ATP; the sequence is PNGCGKSN. Coiled-coil stretches lie at residues 170-205, 239-504, and 694-1054; these read VTKYRERRKETEGRLRDARDNLARLDDIRMELGERI, EARA…ARVQ, and VIER…QLQD.

This sequence belongs to the SMC family. Homodimer.

The protein localises to the cytoplasm. Required for chromosome condensation and partitioning. This Thauera aminoaromatica protein is Chromosome partition protein Smc.